The sequence spans 618 residues: Glucose starvation modulator protein 1 (618 aa).

The segment at residues 20–48 (CEFCHTKHIQCDVGRPCQNCLKRNIGKFC) is a DNA-binding region (zn(2)-C6 fungal-type). The tract at residues 325–353 (ANANTQPSHNAKLESECDSSSHSDADLEK) is disordered. Positions 335 to 353 (AKLESECDSSSHSDADLEK) are enriched in basic and acidic residues. A PAS domain is found at 466–538 (LLDLENMAKL…QIFNELLAFG (73 aa)).

It belongs to the ERT1/acuK family.

The protein resides in the nucleus. Transcription factor which regulates nonfermentable carbon utilization. Binds specifically to 5'-CGGN(8)CGG-3' and 5'-CGGN(9)CGG-3' sequences in the promoter region. The chain is Glucose starvation modulator protein 1 (GSM1) from Saccharomyces cerevisiae (strain JAY291) (Baker's yeast).